The sequence spans 204 residues: MASTSMSLTRACKVHAVLACSIPSVSSAFLTTNVTFLGQPVEMPSQRWSQRRCSRPGPVTVRAEEVKEVTQAKGLSRESGGQWLSCTTRHVRIYAGYVDPETQVMDQSQLDKLTLMLDPDNEFEWPEEMVEKVYDKYRELVETYAGADLTEYTLRLIGSDLEHYIRKLLLAGELKYNLDCRVLNFSMGKPRIDPADLDDVEVEE.

The N-terminal 27 residues, 1–27 (MASTSMSLTRACKVHAVLACSIPSVSS), are a transit peptide targeting the chloroplast.

Belongs to the NDH complex subunit M family. Part of the chloroplast NDH complex, composed of a mixture of chloroplast and nucleus encoded subunits. Component of the NDH subcomplex A, at least composed of ndhH, ndhI, ndhJ, ndhK, ndhL, ndhM, ndhN and ndhO.

The protein resides in the plastid. The protein localises to the chloroplast thylakoid membrane. The enzyme catalyses a plastoquinone + NADH + (n+1) H(+)(in) = a plastoquinol + NAD(+) + n H(+)(out). It carries out the reaction a plastoquinone + NADPH + (n+1) H(+)(in) = a plastoquinol + NADP(+) + n H(+)(out). Its function is as follows. NDH shuttles electrons from NAD(P)H:plastoquinone, via FMN and iron-sulfur (Fe-S) centers, to quinones in the photosynthetic chain and possibly in a chloroplast respiratory chain. The immediate electron acceptor for the enzyme in this species is believed to be plastoquinone. Couples the redox reaction to proton translocation, and thus conserves the redox energy in a proton gradient. The protein is NAD(P)H-quinone oxidoreductase subunit M, chloroplastic of Physcomitrium patens (Spreading-leaved earth moss).